The primary structure comprises 142 residues: Large ribosomal subunit protein uL13 (142 aa).

It belongs to the universal ribosomal protein uL13 family. As to quaternary structure, part of the 50S ribosomal subunit.

Its function is as follows. This protein is one of the early assembly proteins of the 50S ribosomal subunit, although it is not seen to bind rRNA by itself. It is important during the early stages of 50S assembly. In Erwinia tasmaniensis (strain DSM 17950 / CFBP 7177 / CIP 109463 / NCPPB 4357 / Et1/99), this protein is Large ribosomal subunit protein uL13.